A 130-amino-acid polypeptide reads, in one-letter code: Large ribosomal subunit protein bL17 (130 aa).

This sequence belongs to the bacterial ribosomal protein bL17 family. Part of the 50S ribosomal subunit. Contacts protein L32.

This is Large ribosomal subunit protein bL17 from Azotobacter vinelandii (strain DJ / ATCC BAA-1303).